A 131-amino-acid chain; its full sequence is Ribosome-binding factor A (131 aa).

This sequence belongs to the RbfA family. Monomer. Binds 30S ribosomal subunits, but not 50S ribosomal subunits or 70S ribosomes.

The protein localises to the cytoplasm. In terms of biological role, one of several proteins that assist in the late maturation steps of the functional core of the 30S ribosomal subunit. Associates with free 30S ribosomal subunits (but not with 30S subunits that are part of 70S ribosomes or polysomes). Required for efficient processing of 16S rRNA. May interact with the 5'-terminal helix region of 16S rRNA. This is Ribosome-binding factor A from Ruegeria sp. (strain TM1040) (Silicibacter sp.).